Consider the following 100-residue polypeptide: Protein RADIALIS-like 1 (100 aa).

Residues 9-64 enclose the SANT domain; the sequence is QSSGSWTAKQNKAFEQALATYDQDTPNRWQNVAKVVGGKTTEEVKRHYELLVQDIN. Residues 73–100 are disordered; it reads FPNYRTSGGCTNGRLSQEEKRMRNMRLQ. A compositionally biased stretch (polar residues) spans 76 to 87; the sequence is YRTSGGCTNGRL.

The protein resides in the nucleus. Probable transcription factor. This chain is Protein RADIALIS-like 1 (RL1), found in Arabidopsis thaliana (Mouse-ear cress).